The primary structure comprises 324 residues: Melanoma-associated antigen B16 (324 aa).

The segment covering Met1–His15 has biased composition (basic and acidic residues). Disordered regions lie at residues Met1–Thr22 and Leu39–Val108. The segment covering Ser70–Ser81 has biased composition (low complexity). A compositionally biased stretch (acidic residues) spans Glu82–Ser95. One can recognise an MAGE domain in the interval Leu113–Ala312.

This Homo sapiens (Human) protein is Melanoma-associated antigen B16 (MAGEB16).